We begin with the raw amino-acid sequence, 325 residues long: Elongation factor P--(R)-beta-lysine ligase (325 aa).

76-78 (SPE) is a binding site for substrate. ATP-binding positions include 100–102 (RNE) and Asn109. Tyr118 is a substrate binding site. ATP is bound at residue 244-245 (EL). Glu251 contributes to the substrate binding site. Residue Gly300 coordinates ATP.

Belongs to the class-II aminoacyl-tRNA synthetase family. EpmA subfamily. Homodimer.

It catalyses the reaction D-beta-lysine + L-lysyl-[protein] + ATP = N(6)-((3R)-3,6-diaminohexanoyl)-L-lysyl-[protein] + AMP + diphosphate + H(+). In terms of biological role, with EpmB is involved in the beta-lysylation step of the post-translational modification of translation elongation factor P (EF-P). Catalyzes the ATP-dependent activation of (R)-beta-lysine produced by EpmB, forming a lysyl-adenylate, from which the beta-lysyl moiety is then transferred to the epsilon-amino group of a conserved specific lysine residue in EF-P. This Citrobacter koseri (strain ATCC BAA-895 / CDC 4225-83 / SGSC4696) protein is Elongation factor P--(R)-beta-lysine ligase.